The chain runs to 510 residues: MDIIGGQHLRQMWDDLADVYGHKTALICESSGGVVNRYSYLELNQEINRTANLFYTLGIRKGNKVALHLDNCPEFIFCWFGLAKIGAIMVPINARLLREESEWILQNSQACLLVTSAQFYPMYQQIQQEDATQLRHICLTDVALPADDGVSSFTQLKNQQPATLCYAPPLSTDDTAEILFTSGTTSRPKGVVITHYNLRFAGYYSAWQCALRDDDVYMTVMPAFHIDCQCTAAMAAFSAGATFVLVEKYSARAFWGQAQKYRATITECIPMMIRTLMVQPPSANDRQHRLREVMFYLNLSEQEKDAFCERFGVRLLTSYGMTETIVGIIGDRPSDKRRWPSIGRAGFCYEAEIRDDHNRPLPAGEIGEICIKGVPGKTIFKEYFLNPKATAKVLEADGWLHTGDTGYRDEEGFFYFVDRRCNMIKRGGENVSCVELENIIATHPKIQDIVVVGIKDSIRDEAIKAFVVLNEGETLSEEEFFRFCDKIWRNLKCPLIWRSEKICHVIARGK.

The protein belongs to the ATP-dependent AMP-binding enzyme family.

It catalyses the reaction 4-(trimethylamino)butanoate + ATP + CoA = 4-(trimethylamino)butanoyl-CoA + AMP + diphosphate. It carries out the reaction crotonobetaine + ATP + CoA = crotonobetainyl-CoA + AMP + diphosphate. The enzyme catalyses (R)-carnitine + ATP + CoA = (R)-carnitinyl-CoA + AMP + diphosphate. The protein operates within amine and polyamine metabolism; carnitine metabolism. Functionally, catalyzes the transfer of CoA to carnitine, generating the initial carnitinyl-CoA needed for the CaiB reaction cycle. Also has activity toward crotonobetaine and gamma-butyrobetaine. The polypeptide is Crotonobetaine/carnitine--CoA ligase (Shigella flexneri serotype 5b (strain 8401)).